The primary structure comprises 211 residues: dITP/XTP pyrophosphatase (211 aa).

Thr7–Lys12 contributes to the substrate binding site. Mg(2+) is bound by residues Glu43 and Asp72. Asp72 serves as the catalytic Proton acceptor. Residues Ser73, Phe169–Asp172, Lys190, and His195–Arg196 contribute to the substrate site.

The protein belongs to the HAM1 NTPase family. As to quaternary structure, homodimer. Mg(2+) is required as a cofactor.

The catalysed reaction is XTP + H2O = XMP + diphosphate + H(+). The enzyme catalyses dITP + H2O = dIMP + diphosphate + H(+). It catalyses the reaction ITP + H2O = IMP + diphosphate + H(+). In terms of biological role, pyrophosphatase that catalyzes the hydrolysis of nucleoside triphosphates to their monophosphate derivatives, with a high preference for the non-canonical purine nucleotides XTP (xanthosine triphosphate), dITP (deoxyinosine triphosphate) and ITP. Seems to function as a house-cleaning enzyme that removes non-canonical purine nucleotides from the nucleotide pool, thus preventing their incorporation into DNA/RNA and avoiding chromosomal lesions. This Hydrogenobaculum sp. (strain Y04AAS1) protein is dITP/XTP pyrophosphatase.